A 401-amino-acid polypeptide reads, in one-letter code: NADH-quinone oxidoreductase subunit D 2 (401 aa).

Belongs to the complex I 49 kDa subunit family. In terms of assembly, NDH-1 is composed of 14 different subunits. Subunits NuoB, C, D, E, F, and G constitute the peripheral sector of the complex.

Its subcellular location is the cell inner membrane. It carries out the reaction a quinone + NADH + 5 H(+)(in) = a quinol + NAD(+) + 4 H(+)(out). In terms of biological role, NDH-1 shuttles electrons from NADH, via FMN and iron-sulfur (Fe-S) centers, to quinones in the respiratory chain. The immediate electron acceptor for the enzyme in this species is believed to be ubiquinone. Couples the redox reaction to proton translocation (for every two electrons transferred, four hydrogen ions are translocated across the cytoplasmic membrane), and thus conserves the redox energy in a proton gradient. In Thermodesulfovibrio yellowstonii (strain ATCC 51303 / DSM 11347 / YP87), this protein is NADH-quinone oxidoreductase subunit D 2.